We begin with the raw amino-acid sequence, 383 residues long: Galactokinase (383 aa).

34-37 is a binding site for substrate; sequence EHTD. 124-130 is a binding site for ATP; the sequence is GAGLSSS. Positions 130 and 162 each coordinate Mg(2+). The active-site Proton acceptor is aspartate 174. A substrate-binding site is contributed by tyrosine 223.

Belongs to the GHMP kinase family. GalK subfamily.

It localises to the cytoplasm. The catalysed reaction is alpha-D-galactose + ATP = alpha-D-galactose 1-phosphate + ADP + H(+). It functions in the pathway carbohydrate metabolism; galactose metabolism. Functionally, catalyzes the transfer of the gamma-phosphate of ATP to D-galactose to form alpha-D-galactose-1-phosphate (Gal-1-P). This chain is Galactokinase, found in Yersinia enterocolitica serotype O:8 / biotype 1B (strain NCTC 13174 / 8081).